Reading from the N-terminus, the 83-residue chain is Sulfur carrier protein TusA (83 aa).

Cys-20 acts as the Cysteine persulfide intermediate in catalysis.

It belongs to the sulfur carrier protein TusA family.

The protein resides in the cytoplasm. In terms of biological role, sulfur carrier protein which probably makes part of a sulfur-relay system. The protein is Sulfur carrier protein TusA of Pseudomonas fluorescens (strain SBW25).